Consider the following 228-residue polypeptide: 2,3-bisphosphoglycerate-dependent phosphoglycerate mutase (228 aa).

Substrate contacts are provided by residues 8–15 (RHGQSEWN), 21–22 (TG), Arg-60, 87–90 (ERHY), Lys-98, 114–115 (RR), and 183–184 (GN). His-9 functions as the Tele-phosphohistidine intermediate in the catalytic mechanism. Residue Glu-87 is the Proton donor/acceptor of the active site.

The protein belongs to the phosphoglycerate mutase family. BPG-dependent PGAM subfamily.

It carries out the reaction (2R)-2-phosphoglycerate = (2R)-3-phosphoglycerate. Its pathway is carbohydrate degradation; glycolysis; pyruvate from D-glyceraldehyde 3-phosphate: step 3/5. In terms of biological role, catalyzes the interconversion of 2-phosphoglycerate and 3-phosphoglycerate. This is 2,3-bisphosphoglycerate-dependent phosphoglycerate mutase from Staphylococcus epidermidis (strain ATCC 12228 / FDA PCI 1200).